The chain runs to 154 residues: MADRDRSYRTFDQVVRGDRTNYQSGPSTTQVLTVLTLLPIGGTLLALAGLTLTGTVIGLCMATPLFVIFSPVLVPAAIAVFMAVAGFLSSGAFGLTGLSSLSYVFNRFRQATGTEQLDADRAKRGMQDMVGYVGQKTKETGQTIENKAHEGGRT.

Ala2 carries the N-acetylalanine modification. The polar stretch occupies residues 2–33 (ADRDRSYRTFDQVVRGDRTNYQSGPSTTQVLT). Helical transmembrane passes span 31–51 (VLTVLTLLPIGGTLLALAGLT), 65–85 (LFVIFSPVLVPAAIAVFMAVA), and 86–106 (GFLSSGAFGLTGLSSLSYVFN). Positions 34 to 105 (VLTLLPIGGT…TGLSSLSYVF (72 aa)) are hydrophobic.

This sequence belongs to the oleosin family.

The protein localises to the lipid droplet. The protein resides in the membrane. May have a structural role to stabilize the lipid body during desiccation of the seed by preventing coalescence of the oil. Probably interacts with both lipid and phospholipid moieties of lipid bodies. May also provide recognition signals for specific lipase anchorage in lipolysis during seedling growth. This Gossypium hirsutum (Upland cotton) protein is Oleosin 16.4 kDa (MATP7).